The following is a 103-amino-acid chain: Small ribosomal subunit protein uS10 (103 aa).

Belongs to the universal ribosomal protein uS10 family. In terms of assembly, part of the 30S ribosomal subunit.

In terms of biological role, involved in the binding of tRNA to the ribosomes. This chain is Small ribosomal subunit protein uS10, found in Cellvibrio japonicus (strain Ueda107) (Pseudomonas fluorescens subsp. cellulosa).